We begin with the raw amino-acid sequence, 1162 residues long: DNA-directed RNA polymerase subunit beta 1 (1162 aa).

This sequence belongs to the RNA polymerase beta chain family. In terms of assembly, the RNAP catalytic core consists of 2 alpha, 1 beta, 1 beta' and 1 omega subunit. When a sigma factor is associated with the core the holoenzyme is formed, which can initiate transcription.

The enzyme catalyses RNA(n) + a ribonucleoside 5'-triphosphate = RNA(n+1) + diphosphate. DNA-dependent RNA polymerase catalyzes the transcription of DNA into RNA using the four ribonucleoside triphosphates as substrates. In Nocardia farcinica (strain IFM 10152), this protein is DNA-directed RNA polymerase subunit beta 1.